Reading from the N-terminus, the 125-residue chain is Large ribosomal subunit protein bL12 (125 aa).

It belongs to the bacterial ribosomal protein bL12 family. As to quaternary structure, homodimer. Part of the ribosomal stalk of the 50S ribosomal subunit. Forms a multimeric L10(L12)X complex, where L10 forms an elongated spine to which 2 to 4 L12 dimers bind in a sequential fashion. Binds GTP-bound translation factors.

Its function is as follows. Forms part of the ribosomal stalk which helps the ribosome interact with GTP-bound translation factors. Is thus essential for accurate translation. The polypeptide is Large ribosomal subunit protein bL12 (Thermoanaerobacter sp. (strain X514)).